The chain runs to 522 residues: MSAFSVEKIGLQDSQQFSKLFIDYLAQQEHIQPLYTFYPDMAGLETAIEKRSKQPINRTVLVERLKAQYKDLPVSEKVQQNIERLASEHTFTITTGHQLCLGTGPLYLILKTLSCVKLCEALKTKHADNEFVPVFWMASEDHDAAEINHFYVFGKKYTWETTQTGAVGRFTTTGISEVLETIKDIPAWLKDAYQSSVTLAEATRKVMHQLFAEYGVVVIDGDDAALKKEFTAVIEKELFEQPAVAVMNQTNRSIERHGYSIQVNPRDINLFYVKDSLRERIEKQGERFVVLHTDVSFSAGEIKKEVADHPERFSPNVVLRPLYESTILPDIAYVGGPGEIAYWLQLKEVFAVYNTFLPAIFPRMFSGVITKQQCVKLEKAHVTVAELFLSEFDLKQVVVSRSIQEEISIEAEAGKITAAFDTIASIAATVDGSLQSWAQAEKAKALKQLEDIEKKLRKAEERKHDDVIKSVLGIRDKILPNGKLQERQESVFTFLVNDAQLIEKLYQSLDPCTFNIQMCCYE.

Residues 436-469 (SWAQAEKAKALKQLEDIEKKLRKAEERKHDDVIK) are a coiled coil.

The protein belongs to the BshC family.

The sequence is that of Putative cysteine ligase BshC from Cytophaga hutchinsonii (strain ATCC 33406 / DSM 1761 / CIP 103989 / NBRC 15051 / NCIMB 9469 / D465).